Consider the following 96-residue polypeptide: Protein Vpr (96 aa).

The tract at residues 1–42 (MEQAPEDQGPQREPYNEWTLDLLEELKNEAVRHFPRPWLHSL) is homooligomerization. A phosphoserine; by host mark is found at S79, S94, and S96.

The protein belongs to the HIV-1 VPR protein family. Homooligomer, may form homodimer. Interacts with p6-gag region of the Pr55 Gag precursor protein through a (Leu-X-X)4 motif near the C-terminus of the P6gag protein. Interacts with host UNG. May interact with host RAD23A/HHR23A. Interacts with host VPRBP/DCAF1, leading to hijack the CUL4A-RBX1-DDB1-DCAF1/VPRBP complex, mediating ubiquitination of host proteins such as TERT and ZGPAT and arrest of the cell cycle in G2 phase. Phosphorylated on several residues by host. These phosphorylations regulate VPR activity for the nuclear import of the HIV-1 pre-integration complex.

Its subcellular location is the virion. The protein resides in the host nucleus. It is found in the host extracellular space. Functionally, during virus replication, may deplete host UNG protein, and incude G2-M cell cycle arrest. Acts by targeting specific host proteins for degradation by the 26S proteasome, through association with the cellular CUL4A-DDB1 E3 ligase complex by direct interaction with host VPRPB/DCAF-1. Cell cycle arrest reportedly occurs within hours of infection and is not blocked by antiviral agents, suggesting that it is initiated by the VPR carried into the virion. Additionally, VPR induces apoptosis in a cell cycle dependent manner suggesting that these two effects are mechanistically linked. Detected in the serum and cerebrospinal fluid of AIDS patient, VPR may also induce cell death to bystander cells. In terms of biological role, during virus entry, plays a role in the transport of the viral pre-integration (PIC) complex to the host nucleus. This function is crucial for viral infection of non-dividing macrophages. May act directly at the nuclear pore complex, by binding nucleoporins phenylalanine-glycine (FG)-repeat regions. This chain is Protein Vpr, found in Human immunodeficiency virus type 1 group M subtype F1 (isolate 93BR020) (HIV-1).